A 357-amino-acid polypeptide reads, in one-letter code: Guanine nucleotide-binding protein alpha-1 subunit (357 aa).

A lipid anchor (N-myristoyl glycine) is attached at glycine 2. Cysteine 4 carries the S-palmitoyl cysteine lipid modification. The 326-residue stretch at 32 to 357 (NIIKLLLLGA…STKLKGCGLY (326 aa)) folds into the G-alpha domain. Residues 35 to 48 (KLLLLGAGESGKST) are G1 motif. Glutamate 43, serine 44, glycine 45, lysine 46, serine 47, threonine 48, aspartate 151, leucine 176, threonine 182, glycine 204, asparagine 270, lysine 271, aspartate 273, and alanine 329 together coordinate GTP. Position 47 (serine 47) interacts with Mg(2+). The segment at 174–182 (DILHTRVPT) is G2 motif. Threonine 182 serves as a coordination point for Mg(2+). The tract at residues 197 to 206 (FRVFDVGGQR) is G3 motif. Residues 266–273 (ILFLNKID) are G4 motif. The segment at 327-332 (TCATDT) is G5 motif.

This sequence belongs to the G-alpha family. In terms of assembly, g proteins are composed of 3 units; alpha, beta and gamma. The alpha chain contains the guanine nucleotide binding site. Mg(2+) serves as cofactor.

Guanine nucleotide-binding proteins (G proteins) are involved as modulators or transducers in various transmembrane signaling systems. This Caenorhabditis elegans protein is Guanine nucleotide-binding protein alpha-1 subunit (gpa-1).